The sequence spans 473 residues: Glutamyl-tRNA reductase (473 aa).

Substrate-binding positions include 49-52 (TCNR), Ser-109, 114-116 (EQQ), and Gln-120. The active-site Nucleophile is the Cys-50. 189-194 (GAGSMG) serves as a coordination point for NADP(+). The tract at residues 445-473 (SGLDAGSGPQGADGPSAGPTPSAPNPSAE) is disordered.

It belongs to the glutamyl-tRNA reductase family. As to quaternary structure, homodimer.

It carries out the reaction (S)-4-amino-5-oxopentanoate + tRNA(Glu) + NADP(+) = L-glutamyl-tRNA(Glu) + NADPH + H(+). Its pathway is porphyrin-containing compound metabolism; protoporphyrin-IX biosynthesis; 5-aminolevulinate from L-glutamyl-tRNA(Glu): step 1/2. Its function is as follows. Catalyzes the NADPH-dependent reduction of glutamyl-tRNA(Glu) to glutamate 1-semialdehyde (GSA). The protein is Glutamyl-tRNA reductase of Mycobacterium ulcerans (strain Agy99).